The following is a 115-amino-acid chain: Large ribosomal subunit protein bL19 (115 aa).

This sequence belongs to the bacterial ribosomal protein bL19 family.

Functionally, this protein is located at the 30S-50S ribosomal subunit interface and may play a role in the structure and function of the aminoacyl-tRNA binding site. This chain is Large ribosomal subunit protein bL19, found in Streptococcus pyogenes serotype M2 (strain MGAS10270).